The following is a 276-amino-acid chain: Halorhodopsin (276 aa).

Positions 1-20 (MTAASTTATTVLQATQSDVL) are excised as a propeptide. A Pyrrolidone carboxylic acid modification is found at Q21. 7 consecutive transmembrane segments (helical) span residues 31–51 (SSIW…VAMG), 61–81 (LIWV…AGLA), 109–129 (YLTW…LADT), 134–154 (LFTA…AALI), 162–182 (WVFY…LLVQ), 195–215 (IFGT…ILWA), and 220–240 (GVAL…DILA). At K241 the chain carries N6-(retinylidene)lysine.

This sequence belongs to the archaeal/bacterial/fungal opsin family. In terms of processing, the covalent binding of retinal to the apoprotein, bacterioopsin, generates bacteriorhodopsin.

It is found in the membrane. In terms of biological role, light-driven chloride pump. This is Halorhodopsin (hop) from Haloarcula marismortui (strain ATCC 43049 / DSM 3752 / JCM 8966 / VKM B-1809) (Halobacterium marismortui).